The primary structure comprises 499 residues: MVLLYSQASWDKRSKADALVLPFWMKNSKAQEAAVVDEDYKLVYQNALSNFSGKKGETAFLFGNDHTKEQKIVLLGLGKSEEVSGTTVLEAYAQATTVLRKAKCKTVNILLPTISQLRFSVEEFLTNLAAGVLSLNYNYPTYHKVDTSLPFLEKVTVMGIVSKVGDKIFRKEESLFEGVYLTRDLVNTNADEVTPEKLAAVAKDLAGEFASLDVKILDRKAILKEKMGLLAAVAKGAAVEPRFIVLDYQGKPKSKDRTVLIGKGVTFDSGGLDLKPGKAMITMKEDMAGAATVLGIFSALASLELPINVTGIIPATENAIGSAAYKMGDVYVGMTGLSVEIGSTDAEGRLILADAISYALKYCNPTRIIDFATLTGAMVVSLGESVAGFFANNDVLARDLAEASSETGEALWRMPLVEKYDQALHSDIADMKNIGSNRAGSITAALFLQRFLEDNPVAWAHLDIAGTAYHEKEELPYPKYATGFGVRCLIHYMEKFLSK.

Lysine 263 and aspartate 268 together coordinate Mn(2+). Residue lysine 275 is part of the active site. Residues aspartate 286, aspartate 345, and glutamate 347 each contribute to the Mn(2+) site. The active site involves arginine 349.

It belongs to the peptidase M17 family. Mn(2+) is required as a cofactor.

It is found in the cytoplasm. The enzyme catalyses Release of an N-terminal amino acid, Xaa-|-Yaa-, in which Xaa is preferably Leu, but may be other amino acids including Pro although not Arg or Lys, and Yaa may be Pro. Amino acid amides and methyl esters are also readily hydrolyzed, but rates on arylamides are exceedingly low.. The catalysed reaction is Release of an N-terminal amino acid, preferentially leucine, but not glutamic or aspartic acids.. In terms of biological role, presumably involved in the processing and regular turnover of intracellular proteins. Catalyzes the removal of unsubstituted N-terminal amino acids from various peptides. The protein is Probable cytosol aminopeptidase (pepA) of Chlamydia trachomatis serovar D (strain ATCC VR-885 / DSM 19411 / UW-3/Cx).